The chain runs to 78 residues: Serine--glyoxylate aminotransferase (78 aa).

The protein belongs to the class-V pyridoxal-phosphate-dependent aminotransferase family. As to quaternary structure, homodimer. Requires pyridoxal 5'-phosphate as cofactor. In terms of tissue distribution, expressed in leaves but not in root tissue or seedlings.

The protein resides in the peroxisome. It catalyses the reaction glyoxylate + L-serine = 3-hydroxypyruvate + glycine. It carries out the reaction glyoxylate + L-alanine = glycine + pyruvate. With respect to regulation, inhibited by aminooxyacetate. This is Serine--glyoxylate aminotransferase from Triticum aestivum (Wheat).